The chain runs to 247 residues: Probable transcriptional regulatory protein Hhal_2210 (247 aa).

Belongs to the TACO1 family.

It localises to the cytoplasm. In Halorhodospira halophila (strain DSM 244 / SL1) (Ectothiorhodospira halophila (strain DSM 244 / SL1)), this protein is Probable transcriptional regulatory protein Hhal_2210.